The primary structure comprises 134 residues: Small ribosomal subunit protein bS6 (134 aa).

Residues 99–134 are disordered; sequence EPSAMMQKRDRDERKDRERGRRRDDDGYVGERNEEG. Positions 105 to 134 are enriched in basic and acidic residues; the sequence is QKRDRDERKDRERGRRRDDDGYVGERNEEG.

The protein belongs to the bacterial ribosomal protein bS6 family.

Its function is as follows. Binds together with bS18 to 16S ribosomal RNA. The polypeptide is Small ribosomal subunit protein bS6 (Methylobacterium sp. (strain 4-46)).